A 176-amino-acid chain; its full sequence is Large ribosomal subunit protein uL6 (176 aa).

Belongs to the universal ribosomal protein uL6 family. In terms of assembly, part of the 50S ribosomal subunit.

Functionally, this protein binds to the 23S rRNA, and is important in its secondary structure. It is located near the subunit interface in the base of the L7/L12 stalk, and near the tRNA binding site of the peptidyltransferase center. The polypeptide is Large ribosomal subunit protein uL6 (Methanosarcina mazei (strain ATCC BAA-159 / DSM 3647 / Goe1 / Go1 / JCM 11833 / OCM 88) (Methanosarcina frisia)).